We begin with the raw amino-acid sequence, 648 residues long: Forkhead box protein N1 (648 aa).

The tract at residues 1-105 is disordered; sequence MVSLPPPQSD…SDKYPGFGFE (105 aa). Pro residues predominate over residues 58 to 67; sequence ERTPSLPPHS. Residues 271–367 constitute a DNA-binding region (fork-head); it reads KPIYSYSILI…EELQKWKRKD (97 aa). 3 disordered regions span residues 392 to 445, 458 to 508, and 623 to 648; these read LGSP…LLMG, LSPG…LLAE, and LEPT…VALA. Over residues 462 to 473 the composition is skewed to pro residues; it reads LAPPGPPQPLFP.

Expressed in thymus.

It localises to the nucleus. Functionally, transcriptional regulator which regulates the development, differentiation, and function of thymic epithelial cells (TECs) both in the prenatal and postnatal thymus. Acts as a master regulator of the TECs lineage development and is required from the onset of differentiation in progenitor TECs in the developing fetus to the final differentiation steps through which TECs mature to acquire their full functionality. Regulates, either directly or indirectly the expression of a variety of genes that mediate diverse aspects of thymus development and function, including MHC Class II, DLL4, CCL25, CTSL, CD40 and PAX1. Regulates the differentiation of the immature TECs into functional cortical TECs (cTECs) and medullary TECs (mTECs). Essential for maintenance of mTECs population in the postnatal thymus. Involved in the morphogenesis and maintenance of the three-dimensional thymic microstructure which is necessary for a fully functional thymus. Plays an important role in the maintenance of hematopoiesis and particularly T lineage progenitors within the bone marrow niche with age. Essential for the vascularization of the thymus anlage. Promotes the terminal differentiation of epithelial cells in the epidermis and hair follicles, partly by negatively regulating the activity of protein kinase C. Plays a crucial role in the early prenatal stages of T-cell ontogeny. This chain is Forkhead box protein N1 (FOXN1), found in Homo sapiens (Human).